A 357-amino-acid chain; its full sequence is DNA replication and repair protein RecF (357 aa).

30–37 (GANGSGKT) serves as a coordination point for ATP.

It belongs to the RecF family.

It is found in the cytoplasm. Functionally, the RecF protein is involved in DNA metabolism; it is required for DNA replication and normal SOS inducibility. RecF binds preferentially to single-stranded, linear DNA. It also seems to bind ATP. This Salmonella paratyphi A (strain ATCC 9150 / SARB42) protein is DNA replication and repair protein RecF.